The chain runs to 216 residues: Octanoyltransferase (216 aa).

In terms of domain architecture, BPL/LPL catalytic spans 32–207; it reads SDSQDELWIV…TFSQIMGYQQ (176 aa). Residues 71–78, 138–140, and 151–153 contribute to the substrate site; these read RGGQVTYH, SLG, and GLA. Catalysis depends on Cys-169, which acts as the Acyl-thioester intermediate.

Belongs to the LipB family.

The protein resides in the cytoplasm. The enzyme catalyses octanoyl-[ACP] + L-lysyl-[protein] = N(6)-octanoyl-L-lysyl-[protein] + holo-[ACP] + H(+). The protein operates within protein modification; protein lipoylation via endogenous pathway; protein N(6)-(lipoyl)lysine from octanoyl-[acyl-carrier-protein]: step 1/2. Its function is as follows. Catalyzes the transfer of endogenously produced octanoic acid from octanoyl-acyl-carrier-protein onto the lipoyl domains of lipoate-dependent enzymes. Lipoyl-ACP can also act as a substrate although octanoyl-ACP is likely to be the physiological substrate. This Shewanella frigidimarina (strain NCIMB 400) protein is Octanoyltransferase.